A 140-amino-acid polypeptide reads, in one-letter code: uncharacterized protein (140 aa).

The next 3 helical transmembrane spans lie at 20 to 42, 88 to 110, and 115 to 137; these read ILYYGGLIGIIFMAITFAIYVSG, FVALAFLAMITIICYLAIIPVLL, and IIYTILAIAEVIILLLAASGLLQ.

It is found in the cell membrane. This is an uncharacterized protein from Archaeoglobus fulgidus (strain ATCC 49558 / DSM 4304 / JCM 9628 / NBRC 100126 / VC-16).